We begin with the raw amino-acid sequence, 545 residues long: 2-succinyl-5-enolpyruvyl-6-hydroxy-3-cyclohexene-1-carboxylate synthase (545 aa).

The tract at residues 184 to 209 is disordered; sequence PLVPDPEPHGAPTPAGRPGGRPWTYT. Positions 195–205 are enriched in low complexity; it reads PTPAGRPGGRP.

Belongs to the TPP enzyme family. MenD subfamily. Homodimer. It depends on Mg(2+) as a cofactor. Mn(2+) serves as cofactor. Requires thiamine diphosphate as cofactor.

The enzyme catalyses isochorismate + 2-oxoglutarate + H(+) = 5-enolpyruvoyl-6-hydroxy-2-succinyl-cyclohex-3-ene-1-carboxylate + CO2. It functions in the pathway quinol/quinone metabolism; 1,4-dihydroxy-2-naphthoate biosynthesis; 1,4-dihydroxy-2-naphthoate from chorismate: step 2/7. It participates in quinol/quinone metabolism; menaquinone biosynthesis. Catalyzes the thiamine diphosphate-dependent decarboxylation of 2-oxoglutarate and the subsequent addition of the resulting succinic semialdehyde-thiamine pyrophosphate anion to isochorismate to yield 2-succinyl-5-enolpyruvyl-6-hydroxy-3-cyclohexene-1-carboxylate (SEPHCHC). The polypeptide is 2-succinyl-5-enolpyruvyl-6-hydroxy-3-cyclohexene-1-carboxylate synthase (Mycobacterium avium (strain 104)).